We begin with the raw amino-acid sequence, 82 residues long: Progonadoliberin-3 (82 aa).

Positions 1-23 (MDLSSKTVVQVVMLALIAQVTFS) are cleaved as a signal peptide. Gln24 carries the pyrrolidone carboxylic acid modification. Gly33 is modified (glycine amide).

This sequence belongs to the GnRH family.

The protein resides in the secreted. Stimulates the secretion of gonadotropins. The sequence is that of Progonadoliberin-3 (gnrh3) from Oncorhynchus masou (Cherry salmon).